The primary structure comprises 359 residues: MDNRTIVILGITGSIGIQTVEVIQSLGNFHILGGTYHKNKDLADAISQKHNLSNLISTSRGYDLAIEMLEKLRPDITLVAIPGFSSLILALKAIEVSKRVLLASKEALVCGGWLIKEKLKNCETNLIPVDSEHTALMQIYEEPFEEVIITSSGGALRDWELHNLHNAKPKDVLKHPVWKMGERITVDSATMVNKAFEVFEASEYFNIPISKIRVLIHKEGIVHAGILLCDSTIKLHLGFADMKVPIAYALTYPERKYKKPSWPDLVNTNLSFENVDETRYPAFKLLYEISENYAKRTAYNASDEIAVQNFLEEKIKFTDIPKVIEKVVESTNGQVRDLKDLIQIDKESRKKALEVIRCL.

Thr12, Gly13, Ser14, Ile15, Lys38, and Asn39 together coordinate NADPH. Lys105 serves as a coordination point for 1-deoxy-D-xylulose 5-phosphate. Glu106 contributes to the NADPH binding site. Asp130 serves as a coordination point for Mn(2+). The 1-deoxy-D-xylulose 5-phosphate site is built by Ser131, Glu132, Ser152, and His175. Residue Glu132 coordinates Mn(2+). Residue Gly181 participates in NADPH binding. Residues Ser188, Asn193, Lys194, and Glu197 each contribute to the 1-deoxy-D-xylulose 5-phosphate site. Glu197 lines the Mn(2+) pocket.

It belongs to the DXR family. Mg(2+) is required as a cofactor. The cofactor is Mn(2+).

The enzyme catalyses 2-C-methyl-D-erythritol 4-phosphate + NADP(+) = 1-deoxy-D-xylulose 5-phosphate + NADPH + H(+). It participates in isoprenoid biosynthesis; isopentenyl diphosphate biosynthesis via DXP pathway; isopentenyl diphosphate from 1-deoxy-D-xylulose 5-phosphate: step 1/6. Catalyzes the NADPH-dependent rearrangement and reduction of 1-deoxy-D-xylulose-5-phosphate (DXP) to 2-C-methyl-D-erythritol 4-phosphate (MEP). In Pseudothermotoga lettingae (strain ATCC BAA-301 / DSM 14385 / NBRC 107922 / TMO) (Thermotoga lettingae), this protein is 1-deoxy-D-xylulose 5-phosphate reductoisomerase.